Reading from the N-terminus, the 278-residue chain is Large ribosomal subunit protein uL2 (278 aa).

Positions 222–264 (RGVAMNPVDHPHGGGEGRTSGGRNPVTPWGVPTKGKKTRSNKR) are disordered.

It belongs to the universal ribosomal protein uL2 family. As to quaternary structure, part of the 50S ribosomal subunit. Forms a bridge to the 30S subunit in the 70S ribosome.

One of the primary rRNA binding proteins. Required for association of the 30S and 50S subunits to form the 70S ribosome, for tRNA binding and peptide bond formation. It has been suggested to have peptidyltransferase activity; this is somewhat controversial. Makes several contacts with the 16S rRNA in the 70S ribosome. In Methylobacterium radiotolerans (strain ATCC 27329 / DSM 1819 / JCM 2831 / NBRC 15690 / NCIMB 10815 / 0-1), this protein is Large ribosomal subunit protein uL2.